A 403-amino-acid polypeptide reads, in one-letter code: tRNA(Met) cytidine acetate ligase (403 aa).

Residues 7 to 20 (VVEY…HAYH), glycine 101, asparagine 164, and 189 to 190 (RI) contribute to the ATP site.

This sequence belongs to the TmcAL family.

The protein localises to the cytoplasm. The enzyme catalyses cytidine(34) in elongator tRNA(Met) + acetate + ATP = N(4)-acetylcytidine(34) in elongator tRNA(Met) + AMP + diphosphate. In terms of biological role, catalyzes the formation of N(4)-acetylcytidine (ac(4)C) at the wobble position of elongator tRNA(Met), using acetate and ATP as substrates. First activates an acetate ion to form acetyladenylate (Ac-AMP) and then transfers the acetyl group to tRNA to form ac(4)C34. The sequence is that of tRNA(Met) cytidine acetate ligase from Lysinibacillus sphaericus (strain C3-41).